The sequence spans 500 residues: NAD(P)H-quinone oxidoreductase chain 4, chloroplastic (500 aa).

14 helical membrane-spanning segments follow: residues F4 to L24, V31 to F51, G84 to A104, A111 to C131, L134 to M154, F167 to L187, I212 to T232, H242 to V262, A272 to A292, S308 to L328, G330 to G350, L386 to T406, L411 to I431, and L462 to V482.

This sequence belongs to the complex I subunit 4 family.

Its subcellular location is the plastid. It localises to the chloroplast thylakoid membrane. It carries out the reaction a plastoquinone + NADH + (n+1) H(+)(in) = a plastoquinol + NAD(+) + n H(+)(out). The enzyme catalyses a plastoquinone + NADPH + (n+1) H(+)(in) = a plastoquinol + NADP(+) + n H(+)(out). This Jasminum nudiflorum (Winter jasmine) protein is NAD(P)H-quinone oxidoreductase chain 4, chloroplastic.